The primary structure comprises 583 residues: Sensor protein SrrB (583 aa).

At 1 to 11 the chain is on the cytoplasmic side; sequence MMSRLNSVVIK. Residues 12 to 32 traverse the membrane as a helical segment; sequence LWLTIILIVTTVLILLSIALI. The Extracellular segment spans residues 33–174; the sequence is TFMQYYFTQE…SIEDTNNAIT (142 aa). Residues 175-195 traverse the membrane as a helical segment; it reads IITIITAVIFLTITTVFAFFL. Topologically, residues 196–583 are cytoplasmic; sequence SSRITKPLRR…TFIIKLPKPE (388 aa). In terms of domain architecture, HAMP spans 197 to 249; sequence SRITKPLRRLRDQATRVSEGDYSYKPSVTTKDEIGQLSQAFNQMSTEIEEHVD. In terms of domain architecture, Histidine kinase spans 366–583; that stretch reads NVSHELRTPI…TFIIKLPKPE (218 aa). Histidine 369 carries the post-translational modification Phosphohistidine; by autocatalysis.

The protein resides in the cell membrane. The enzyme catalyses ATP + protein L-histidine = ADP + protein N-phospho-L-histidine.. Its function is as follows. Member of the two-component regulatory system SrrA/SrrB, which is involved in the global regulation of staphylococcal virulence factors in response to environmental oxygen levels as well as biofilm formation. Also plays an essential role in host-derived nitric oxide resistance by regulating hmp/flavohemoglobin, an enzyme that detoxifies nitric oxide by converting it to nitrate. Functions as a sensor protein kinase which is autophosphorylated at a histidine residue and transfers its phosphate group to SrrA. In turn, SrrA binds to the upstream promoter regions of the target genes to positively and negatively regulate their expression. In Staphylococcus aureus, this protein is Sensor protein SrrB (srrB).